The chain runs to 139 residues: ATP synthase epsilon chain (139 aa).

Belongs to the ATPase epsilon chain family. In terms of assembly, F-type ATPases have 2 components, CF(1) - the catalytic core - and CF(0) - the membrane proton channel. CF(1) has five subunits: alpha(3), beta(3), gamma(1), delta(1), epsilon(1). CF(0) has three main subunits: a, b and c.

It is found in the cell membrane. Functionally, produces ATP from ADP in the presence of a proton gradient across the membrane. In Ligilactobacillus salivarius (strain UCC118) (Lactobacillus salivarius), this protein is ATP synthase epsilon chain.